A 476-amino-acid polypeptide reads, in one-letter code: Protein DETOXIFICATION 17 (476 aa).

The next 12 membrane-spanning stretches (helical) occupy residues 29 to 51, 70 to 90, 111 to 131, 140 to 160, 177 to 197, 205 to 225, 252 to 272, 286 to 306, 326 to 346, 363 to 383, 405 to 425, and 431 to 451; these read LWLS…ISVM, FASV…ETLC, FVLL…EQIL, IASV…AYGL, VFVC…LFVL, GAAL…SCYV, IAFP…LLVL, VLSI…GLGG, LAVY…VTVL, IIAY…LDGL, LGSY…HFHI, and WLGI…VTIF.

It belongs to the multi antimicrobial extrusion (MATE) (TC 2.A.66.1) family.

Its subcellular location is the membrane. The protein is Protein DETOXIFICATION 17 of Arabidopsis thaliana (Mouse-ear cress).